A 546-amino-acid polypeptide reads, in one-letter code: MFS-type transporter patC (546 aa).

Positions 1–15 are enriched in polar residues; sequence MSIDASPSESVLESQ. Positions 1 to 29 are disordered; sequence MSIDASPSESVLESQTPDRVDESIPIKAE. Basic and acidic residues predominate over residues 16–29; that stretch reads TPDRVDESIPIKAE. 14 consecutive transmembrane segments (helical) span residues 41–61, 89–109, 113–133, 143–163, 171–191, 203–223, 245–265, 277–297, 318–338, 350–370, 379–399, 416–436, 447–467, and 515–535; these read IVGF…LLYG, VGFT…YAIF, WLFL…GAAP, VWAG…ITIL, VYVG…PIIG, WSFY…VFLL, WVGT…IVFG, IALY…QYFC, LLLY…VYYI, GIMS…TILL, GYFI…AVLM, ILMG…PAIV, FMNI…SAIF, and VIVS…ALYV.

The protein belongs to the major facilitator superfamily. TCR/Tet family.

The protein resides in the vacuole membrane. Its subcellular location is the cell membrane. Its function is as follows. MFS-type transporter; part of the gene cluster that mediates the biosynthesis of patulin, an acetate-derived tetraketide mycotoxin produced by several fungal species that shows antimicrobial properties against several bacteria. May be involved in the secretion of E-ascladiol to be converted to patulin by the secreted patulin synthase patE. In Penicillium expansum (Blue mold rot fungus), this protein is MFS-type transporter patC.